The chain runs to 293 residues: Glycine--tRNA ligase alpha subunit (293 aa).

This sequence belongs to the class-II aminoacyl-tRNA synthetase family. As to quaternary structure, tetramer of two alpha and two beta subunits.

It localises to the cytoplasm. It carries out the reaction tRNA(Gly) + glycine + ATP = glycyl-tRNA(Gly) + AMP + diphosphate. This Sulfurimonas denitrificans (strain ATCC 33889 / DSM 1251) (Thiomicrospira denitrificans (strain ATCC 33889 / DSM 1251)) protein is Glycine--tRNA ligase alpha subunit.